A 156-amino-acid chain; its full sequence is Ribosomal RNA large subunit methyltransferase H (156 aa).

S-adenosyl-L-methionine-binding positions include glycine 104 and leucine 123–leucine 128.

The protein belongs to the RNA methyltransferase RlmH family. Homodimer.

The protein resides in the cytoplasm. It catalyses the reaction pseudouridine(1915) in 23S rRNA + S-adenosyl-L-methionine = N(3)-methylpseudouridine(1915) in 23S rRNA + S-adenosyl-L-homocysteine + H(+). Functionally, specifically methylates the pseudouridine at position 1915 (m3Psi1915) in 23S rRNA. The chain is Ribosomal RNA large subunit methyltransferase H from Nitrosospira multiformis (strain ATCC 25196 / NCIMB 11849 / C 71).